Consider the following 379-residue polypeptide: MKILRKNHPLLKIINHSFIDLPAPSNISSWWNFGSLLGVCLMIQILTGLFLAMHYTSDTTTAFSSVAHICRDVNYGWLIRYLHANGASMFFICLFIHVGRGIYYGSYVLSETWNIGIILFLTTMATAFVGYVLPWGQMSFWGATVITNLLSAIPYIGNTLVEWIWGGFSVDKATLTRFFAFHFILPFIITAFVLVHLLFLHETGSNNPSGLNSDSDKIPFHPYYTIKDLLGILFLLMALMILALFFPDILGDPDNYTPANPLNTPAHIKPEWYFLFAYAILRSIPNKLGGVLALLLSIIILAAFPLLNTSKQHGLIFRPVTQTIYWIFIANLLVLTWIGGQPVEYPFTMIGQIASVIYFATIIVLMPVSNTIENNIIKL.

The next 4 helical transmembrane spans lie at 33–53 (FGSL…FLAM), 77–98 (WLIR…FIHV), 113–133 (WNIG…GYVL), and 178–198 (FFAF…VHLL). Heme b-binding residues include His-83 and His-97. Heme b is bound by residues His-182 and His-196. His-201 is a binding site for a ubiquinone. The next 4 helical transmembrane spans lie at 226-246 (IKDL…ALFF), 288-308 (LGGV…PLLN), 320-340 (VTQT…WIGG), and 347-367 (FTMI…VLMP).

The protein belongs to the cytochrome b family. In terms of assembly, the cytochrome bc1 complex contains 11 subunits: 3 respiratory subunits (MT-CYB, CYC1 and UQCRFS1), 2 core proteins (UQCRC1 and UQCRC2) and 6 low-molecular weight proteins (UQCRH/QCR6, UQCRB/QCR7, UQCRQ/QCR8, UQCR10/QCR9, UQCR11/QCR10 and a cleavage product of UQCRFS1). This cytochrome bc1 complex then forms a dimer. Requires heme b as cofactor.

The protein resides in the mitochondrion inner membrane. In terms of biological role, component of the ubiquinol-cytochrome c reductase complex (complex III or cytochrome b-c1 complex) that is part of the mitochondrial respiratory chain. The b-c1 complex mediates electron transfer from ubiquinol to cytochrome c. Contributes to the generation of a proton gradient across the mitochondrial membrane that is then used for ATP synthesis. The protein is Cytochrome b (MT-CYB) of Akodon iniscatus (Intelligent grass mouse).